Reading from the N-terminus, the 301-residue chain is Ribosomal RNA small subunit methyltransferase A (301 aa).

S-adenosyl-L-methionine is bound by residues Asn29, Leu31, Gly56, Glu77, Asp102, and Asn127.

This sequence belongs to the class I-like SAM-binding methyltransferase superfamily. rRNA adenine N(6)-methyltransferase family. RsmA subfamily.

It localises to the cytoplasm. The enzyme catalyses adenosine(1518)/adenosine(1519) in 16S rRNA + 4 S-adenosyl-L-methionine = N(6)-dimethyladenosine(1518)/N(6)-dimethyladenosine(1519) in 16S rRNA + 4 S-adenosyl-L-homocysteine + 4 H(+). In terms of biological role, specifically dimethylates two adjacent adenosines (A1518 and A1519) in the loop of a conserved hairpin near the 3'-end of 16S rRNA in the 30S particle. May play a critical role in biogenesis of 30S subunits. This chain is Ribosomal RNA small subunit methyltransferase A, found in Halothermothrix orenii (strain H 168 / OCM 544 / DSM 9562).